The chain runs to 268 residues: MRAKDIRAKAGDEPITMLTAYDAPTAEIAEAAGVDVLLVGDSVGNTRLGYDSTLPVTVDEMASHTAAVARATDDALVVADMPFLSFGADEADAVDNCGRMLKEADADAVKLECGPHTVSLTKTLSDLGIPVQAHLGLTPQRENETGLYRQGTDEESANRILELAREHEAAGAFSLVLEHVPANLAASVTDALSIPTIGIGAGPDCDGQVLVVDEVVGLAEGTAPFSKRFGDVRGEMREAIEAYTDAVDSGSFPGDEHSHYEDDIEDIY.

Residues Asp-41 and Asp-80 each contribute to the Mg(2+) site. Residues Asp-41–Ser-42, Asp-80, and Lys-110 each bind 3-methyl-2-oxobutanoate. Glu-112 is a Mg(2+) binding site. Residue Glu-178 is the Proton acceptor of the active site.

Belongs to the PanB family. In terms of assembly, homodecamer; pentamer of dimers. Mg(2+) serves as cofactor.

Its subcellular location is the cytoplasm. It catalyses the reaction 3-methyl-2-oxobutanoate + (6R)-5,10-methylene-5,6,7,8-tetrahydrofolate + H2O = 2-dehydropantoate + (6S)-5,6,7,8-tetrahydrofolate. The protein operates within cofactor biosynthesis; coenzyme A biosynthesis. In terms of biological role, catalyzes the reversible reaction in which hydroxymethyl group from 5,10-methylenetetrahydrofolate is transferred onto alpha-ketoisovalerate to form ketopantoate. This chain is 3-methyl-2-oxobutanoate hydroxymethyltransferase, found in Natronomonas pharaonis (strain ATCC 35678 / DSM 2160 / CIP 103997 / JCM 8858 / NBRC 14720 / NCIMB 2260 / Gabara) (Halobacterium pharaonis).